Here is a 660-residue protein sequence, read N- to C-terminus: DNA mismatch repair protein MutL (660 aa).

Belongs to the DNA mismatch repair MutL/HexB family.

Its function is as follows. This protein is involved in the repair of mismatches in DNA. It is required for dam-dependent methyl-directed DNA mismatch repair. May act as a 'molecular matchmaker', a protein that promotes the formation of a stable complex between two or more DNA-binding proteins in an ATP-dependent manner without itself being part of a final effector complex. The polypeptide is DNA mismatch repair protein MutL (Streptococcus pyogenes serotype M12 (strain MGAS2096)).